A 67-amino-acid polypeptide reads, in one-letter code: DNA-directed RNA polymerases I, II, and III subunit RPABC5 (67 aa).

Cys7, Cys10, Cys44, and Cys45 together coordinate Zn(2+).

This sequence belongs to the archaeal Rpo10/eukaryotic RPB10 RNA polymerase subunit family. In terms of assembly, component of the RNA polymerase I (Pol I), RNA polymerase II (Pol II) and RNA polymerase III (Pol III) complexes consisting of at least 13, 12 and 17 subunits, respectively.

The protein localises to the nucleus. Its function is as follows. DNA-dependent RNA polymerase catalyzes the transcription of DNA into RNA using the four ribonucleoside triphosphates as substrates. Common component of RNA polymerases I, II and III which synthesize ribosomal RNA precursors, mRNA precursors and many functional non-coding RNAs, and a small RNAs, such as 5S rRNA and tRNAs, respectively. Pol II is the central component of the basal RNA polymerase II transcription machinery. Pols are composed of mobile elements that move relative to each other. In Pol II, RBP10 is part of the core element with the central large cleft. In Caenorhabditis briggsae, this protein is DNA-directed RNA polymerases I, II, and III subunit RPABC5.